Reading from the N-terminus, the 314-residue chain is Lipoyl synthase (314 aa).

Residues Cys61, Cys66, Cys72, Cys87, Cys91, Cys94, and Ser301 each coordinate [4Fe-4S] cluster. The 218-residue stretch at 73-290 folds into the Radical SAM core domain; sequence FGRGTATFMI…ERIATNLGFS (218 aa).

The protein belongs to the radical SAM superfamily. Lipoyl synthase family. The cofactor is [4Fe-4S] cluster.

It localises to the cytoplasm. The enzyme catalyses [[Fe-S] cluster scaffold protein carrying a second [4Fe-4S](2+) cluster] + N(6)-octanoyl-L-lysyl-[protein] + 2 oxidized [2Fe-2S]-[ferredoxin] + 2 S-adenosyl-L-methionine + 4 H(+) = [[Fe-S] cluster scaffold protein] + N(6)-[(R)-dihydrolipoyl]-L-lysyl-[protein] + 4 Fe(3+) + 2 hydrogen sulfide + 2 5'-deoxyadenosine + 2 L-methionine + 2 reduced [2Fe-2S]-[ferredoxin]. Its pathway is protein modification; protein lipoylation via endogenous pathway; protein N(6)-(lipoyl)lysine from octanoyl-[acyl-carrier-protein]: step 2/2. In terms of biological role, catalyzes the radical-mediated insertion of two sulfur atoms into the C-6 and C-8 positions of the octanoyl moiety bound to the lipoyl domains of lipoate-dependent enzymes, thereby converting the octanoylated domains into lipoylated derivatives. The protein is Lipoyl synthase of Nitrosomonas eutropha (strain DSM 101675 / C91 / Nm57).